The following is an 87-amino-acid chain: Large ribosomal subunit protein bL31B (87 aa).

The protein belongs to the bacterial ribosomal protein bL31 family. Type B subfamily. As to quaternary structure, part of the 50S ribosomal subunit.

This chain is Large ribosomal subunit protein bL31B, found in Burkholderia multivorans (strain ATCC 17616 / 249).